Consider the following 395-residue polypeptide: Dual specificity mitogen-activated protein kinase kinase 1 (395 aa).

The tract at residues 1-24 (MPKKKPTPIQLNPNPEGTAVNGTP) is disordered. Over residues 9 to 24 (IQLNPNPEGTAVNGTP) the composition is skewed to polar residues. Residues 68–363 (FEKVSELGAG…LKQLMVHSFI (296 aa)) form the Protein kinase domain. Residues 74 to 82 (LGAGNGGVV) and lysine 97 each bind ATP. Aspartate 190 (proton acceptor) is an active-site residue. Residues serine 218 and serine 222 each carry the phosphoserine; by RAF modification. Positions 284–305 (ASSELAPRPRPPGRPISSYGPD) are disordered.

It belongs to the protein kinase superfamily. STE Ser/Thr protein kinase family. MAP kinase kinase subfamily. Activated by phosphorylation on Ser/Thr catalyzed by MAP kinase kinase kinases (RAF or MOS). In terms of tissue distribution, expressed in the central nervous system, kidney, liver, intestine and the hematopoietic system.

The protein resides in the cytoplasm. It localises to the cytoskeleton. Its subcellular location is the microtubule organizing center. It is found in the centrosome. The protein localises to the spindle pole body. The protein resides in the nucleus. The catalysed reaction is L-seryl-[protein] + ATP = O-phospho-L-seryl-[protein] + ADP + H(+). It carries out the reaction L-threonyl-[protein] + ATP = O-phospho-L-threonyl-[protein] + ADP + H(+). The enzyme catalyses L-tyrosyl-[protein] + ATP = O-phospho-L-tyrosyl-[protein] + ADP + H(+). Dual specificity protein kinase which acts as an essential component of the MAP kinase signal transduction pathway. Binding of extracellular ligands such as growth factors, cytokines and hormones to their cell-surface receptors activates the MAPK/ERK cascade, ultimately leading to phosphorylation of a threonine and a tyrosine residue in a Thr-Glu-Tyr sequence located in MAP kinases. Depending on the cellular context, this pathway mediates diverse biological functions such as cell growth, adhesion, survival and differentiation predominantly through the regulation of transcription, metabolism and cytoskeletal rearrangements. The sequence is that of Dual specificity mitogen-activated protein kinase kinase 1 (map2k1) from Xenopus laevis (African clawed frog).